The primary structure comprises 224 residues: Dickkopf-related protein 4 (224 aa).

An N-terminal signal peptide occupies residues 1-18; that stretch reads MVAAVLLGLSWLCSPLGA. The interval 41-90 is DKK-type Cys-1; the sequence is CLSDTDCNTRKFCLQPRDEKPFCATCRGLRRRCQRDAMCCPGTLCVNDVC. The disordered stretch occupies residues 109 to 139; the sequence is GTHAEGTTGHPVQENQPKRKPSIKKSQGRKG. Basic residues predominate over residues 126 to 136; that stretch reads KRKPSIKKSQG. 5 cysteine pairs are disulfide-bonded: cysteine 145/cysteine 157, cysteine 151/cysteine 166, cysteine 156/cysteine 194, cysteine 176/cysteine 202, and cysteine 196/cysteine 218. Residues 145-218 form a DKK-type Cys-2 region; that stretch reads CLRTFDCGPG…NRQHARLRVC (74 aa).

It belongs to the dickkopf family. In terms of assembly, interacts with LRP5 and LRP6. Appears to be not glycosylated. Post-translationally, can be proteolytically processed by a furin-like protease. Expressed in cerebellum, T-cells, esophagus and lung.

It is found in the secreted. Its function is as follows. Antagonizes canonical Wnt signaling by inhibiting LRP5/6 interaction with Wnt and by forming a ternary complex with the transmembrane protein KREMEN that promotes internalization of LRP5/6. DKKs play an important role in vertebrate development, where they locally inhibit Wnt regulated processes such as antero-posterior axial patterning, limb development, somitogenesis and eye formation. In the adult, Dkks are implicated in bone formation and bone disease, cancer and Alzheimer disease. The polypeptide is Dickkopf-related protein 4 (DKK4) (Homo sapiens (Human)).